The primary structure comprises 336 residues: Holliday junction branch migration complex subunit RuvB (336 aa).

A large ATPase domain (RuvB-L) region spans residues A4–Y184. Residues I23, R24, G65, K68, T69, T70, E131–Y133, R174, Y184, and R221 contribute to the ATP site. Position 69 (T69) interacts with Mg(2+). The segment at Q185–N255 is small ATPAse domain (RuvB-S). The segment at A258–P336 is head domain (RuvB-H). Residues R294, R313, and R318 each coordinate DNA.

It belongs to the RuvB family. Homohexamer. Forms an RuvA(8)-RuvB(12)-Holliday junction (HJ) complex. HJ DNA is sandwiched between 2 RuvA tetramers; dsDNA enters through RuvA and exits via RuvB. An RuvB hexamer assembles on each DNA strand where it exits the tetramer. Each RuvB hexamer is contacted by two RuvA subunits (via domain III) on 2 adjacent RuvB subunits; this complex drives branch migration. In the full resolvosome a probable DNA-RuvA(4)-RuvB(12)-RuvC(2) complex forms which resolves the HJ.

It is found in the cytoplasm. It carries out the reaction ATP + H2O = ADP + phosphate + H(+). Functionally, the RuvA-RuvB-RuvC complex processes Holliday junction (HJ) DNA during genetic recombination and DNA repair, while the RuvA-RuvB complex plays an important role in the rescue of blocked DNA replication forks via replication fork reversal (RFR). RuvA specifically binds to HJ cruciform DNA, conferring on it an open structure. The RuvB hexamer acts as an ATP-dependent pump, pulling dsDNA into and through the RuvAB complex. RuvB forms 2 homohexamers on either side of HJ DNA bound by 1 or 2 RuvA tetramers; 4 subunits per hexamer contact DNA at a time. Coordinated motions by a converter formed by DNA-disengaged RuvB subunits stimulates ATP hydrolysis and nucleotide exchange. Immobilization of the converter enables RuvB to convert the ATP-contained energy into a lever motion, pulling 2 nucleotides of DNA out of the RuvA tetramer per ATP hydrolyzed, thus driving DNA branch migration. The RuvB motors rotate together with the DNA substrate, which together with the progressing nucleotide cycle form the mechanistic basis for DNA recombination by continuous HJ branch migration. Branch migration allows RuvC to scan DNA until it finds its consensus sequence, where it cleaves and resolves cruciform DNA. This is Holliday junction branch migration complex subunit RuvB from Enterobacter sp. (strain 638).